The chain runs to 151 residues: MDMGGNGMAMPPPPAPVKKARYMHMTFFWGKNTEVLFTLWPGARGGMYALAILFMFALAVLLEFRGYRVLEARLARRRAPRAAAALRTAVHAVRVGVAYLIMLALMSFNGGVFLAIVAGHAAGFLAFRAGLCGGGPAPPLEEDRKNDPVCC.

2 consecutive transmembrane segments (helical) span residues glycine 42–leucine 62 and valine 97–valine 117.

This sequence belongs to the copper transporter (Ctr) (TC 1.A.56) family. SLC31A subfamily. In terms of assembly, self-interacts. Interacts with SWEET11 and COPT1.

It localises to the cell membrane. Its function is as follows. Involved in the transport of copper, in cooperation with SWEET11 and COPT1. Contributes to the removal of copper (Cu) from xylem, and thus to the sensitivity toward bacterial pathogens such as X.oryzae pv. oryzae (Xoo). This is Copper transporter 2 (COPT2) from Oryza sativa subsp. japonica (Rice).